The sequence spans 406 residues: Cysteine desulfurase (406 aa).

An N6-(pyridoxal phosphate)lysine modification is found at K226. C364 serves as the catalytic Cysteine persulfide intermediate.

This sequence belongs to the class-V pyridoxal-phosphate-dependent aminotransferase family. Csd subfamily. As to quaternary structure, homodimer. Interacts with SufE and the SufBCD complex composed of SufB, SufC and SufD. The interaction with SufE is required to mediate the direct transfer of the sulfur atom from the S-sulfanylcysteine. Requires pyridoxal 5'-phosphate as cofactor.

The protein resides in the cytoplasm. The enzyme catalyses (sulfur carrier)-H + L-cysteine = (sulfur carrier)-SH + L-alanine. The catalysed reaction is L-selenocysteine + AH2 = hydrogenselenide + L-alanine + A + H(+). It participates in cofactor biosynthesis; iron-sulfur cluster biosynthesis. Its function is as follows. Cysteine desulfurases mobilize the sulfur from L-cysteine to yield L-alanine, an essential step in sulfur metabolism for biosynthesis of a variety of sulfur-containing biomolecules. Component of the suf operon, which is activated and required under specific conditions such as oxidative stress and iron limitation. Acts as a potent selenocysteine lyase in vitro, that mobilizes selenium from L-selenocysteine. Selenocysteine lyase activity is however unsure in vivo. In Salmonella heidelberg (strain SL476), this protein is Cysteine desulfurase.